Here is a 591-residue protein sequence, read N- to C-terminus: L-fucose isomerase (591 aa).

Active-site proton acceptor residues include Glu-337 and Asp-361. Residues Glu-337, Asp-361, and His-528 each coordinate Mn(2+).

Belongs to the L-fucose isomerase family. In terms of assembly, homohexamer. Mn(2+) serves as cofactor.

It localises to the cytoplasm. It carries out the reaction L-fucose = L-fuculose. It functions in the pathway carbohydrate degradation; L-fucose degradation; L-lactaldehyde and glycerone phosphate from L-fucose: step 1/3. In terms of biological role, converts the aldose L-fucose into the corresponding ketose L-fuculose. The sequence is that of L-fucose isomerase from Salmonella typhi.